Reading from the N-terminus, the 155-residue chain is Large ribosomal subunit protein uL22c (155 aa).

It belongs to the universal ribosomal protein uL22 family. As to quaternary structure, part of the 50S ribosomal subunit.

The protein resides in the plastid. It is found in the chloroplast. In terms of biological role, this protein binds specifically to 23S rRNA. Its function is as follows. The globular domain of the protein is located near the polypeptide exit tunnel on the outside of the subunit, while an extended beta-hairpin is found that lines the wall of the exit tunnel in the center of the 70S ribosome. In Nicotiana sylvestris (Wood tobacco), this protein is Large ribosomal subunit protein uL22c (rpl22).